Consider the following 66-residue polypeptide: Large ribosomal subunit protein uL29 (66 aa).

Belongs to the universal ribosomal protein uL29 family.

This Borrelia recurrentis (strain A1) protein is Large ribosomal subunit protein uL29.